We begin with the raw amino-acid sequence, 299 residues long: Acarbose 7(IV)-phosphotransferase (299 aa).

It belongs to the carbohydrate kinase PfkB family.

It catalyses the reaction acarbose + ATP = acarbose 7(IV)-phosphate + ADP + H(+). Its function is as follows. Catalyzes the phosphorylation of the alpha-glucosidase inhibitor acarbose. Phosphorylation of acarbose could be a resistance-like self-protection mechanism. The chain is Acarbose 7(IV)-phosphotransferase from Actinoplanes sp. (strain ATCC 31044 / CBS 674.73 / SE50/110).